Reading from the N-terminus, the 21-residue chain is Large ribosomal subunit protein uL10 (21 aa).

This sequence belongs to the universal ribosomal protein uL10 family. In terms of assembly, part of the ribosomal stalk of the 50S ribosomal subunit. The N-terminus interacts with L11 and the large rRNA to form the base of the stalk. The C-terminus forms an elongated spine to which L12 dimers bind in a sequential fashion forming a multimeric L10(L12)X complex.

Functionally, forms part of the ribosomal stalk, playing a central role in the interaction of the ribosome with GTP-bound translation factors. The protein is Large ribosomal subunit protein uL10 (rplJ) of Bacillus cereus.